A 443-amino-acid polypeptide reads, in one-letter code: Thymidine phosphorylase (443 aa).

It belongs to the thymidine/pyrimidine-nucleoside phosphorylase family. In terms of assembly, homodimer.

The catalysed reaction is thymidine + phosphate = 2-deoxy-alpha-D-ribose 1-phosphate + thymine. It participates in pyrimidine metabolism; dTMP biosynthesis via salvage pathway; dTMP from thymine: step 1/2. Its function is as follows. The enzymes which catalyze the reversible phosphorolysis of pyrimidine nucleosides are involved in the degradation of these compounds and in their utilization as carbon and energy sources, or in the rescue of pyrimidine bases for nucleotide synthesis. The protein is Thymidine phosphorylase of Shewanella oneidensis (strain ATCC 700550 / JCM 31522 / CIP 106686 / LMG 19005 / NCIMB 14063 / MR-1).